We begin with the raw amino-acid sequence, 308 residues long: Lipoyl synthase (308 aa).

Cys51, Cys56, Cys62, Cys77, Cys81, Cys84, and Ser290 together coordinate [4Fe-4S] cluster. A Radical SAM core domain is found at 63 to 279 (WSKRHATFMI…ETIAKSKGFL (217 aa)).

This sequence belongs to the radical SAM superfamily. Lipoyl synthase family. It depends on [4Fe-4S] cluster as a cofactor.

The protein localises to the cytoplasm. The catalysed reaction is [[Fe-S] cluster scaffold protein carrying a second [4Fe-4S](2+) cluster] + N(6)-octanoyl-L-lysyl-[protein] + 2 oxidized [2Fe-2S]-[ferredoxin] + 2 S-adenosyl-L-methionine + 4 H(+) = [[Fe-S] cluster scaffold protein] + N(6)-[(R)-dihydrolipoyl]-L-lysyl-[protein] + 4 Fe(3+) + 2 hydrogen sulfide + 2 5'-deoxyadenosine + 2 L-methionine + 2 reduced [2Fe-2S]-[ferredoxin]. The protein operates within protein modification; protein lipoylation via endogenous pathway; protein N(6)-(lipoyl)lysine from octanoyl-[acyl-carrier-protein]: step 2/2. In terms of biological role, catalyzes the radical-mediated insertion of two sulfur atoms into the C-6 and C-8 positions of the octanoyl moiety bound to the lipoyl domains of lipoate-dependent enzymes, thereby converting the octanoylated domains into lipoylated derivatives. This chain is Lipoyl synthase, found in Pelagibacter ubique (strain HTCC1062).